The chain runs to 238 residues: ATP synthase subunit a (238 aa).

4 consecutive transmembrane segments (helical) span residues 17-37, 80-100, 112-132, and 194-214; these read LSNI…AIIC, ITLL…QIAI, DPIV…YYGI, and IFVG…SIFI.

The protein belongs to the ATPase A chain family. As to quaternary structure, F-type ATPases have 2 components, CF(1) - the catalytic core - and CF(0) - the membrane proton channel. CF(1) has five subunits: alpha(3), beta(3), gamma(1), delta(1), epsilon(1). CF(0) has three main subunits: a(1), b(2) and c(9-12). The alpha and beta chains form an alternating ring which encloses part of the gamma chain. CF(1) is attached to CF(0) by a central stalk formed by the gamma and epsilon chains, while a peripheral stalk is formed by the delta and b chains.

The protein localises to the cell membrane. Functionally, key component of the proton channel; it plays a direct role in the translocation of protons across the membrane. In Listeria welshimeri serovar 6b (strain ATCC 35897 / DSM 20650 / CCUG 15529 / CIP 8149 / NCTC 11857 / SLCC 5334 / V8), this protein is ATP synthase subunit a.